The primary structure comprises 362 residues: Protein RecA (362 aa).

Position 77 to 84 (77 to 84 (GPESSGKT)) interacts with ATP.

It belongs to the RecA family.

It localises to the cytoplasm. Can catalyze the hydrolysis of ATP in the presence of single-stranded DNA, the ATP-dependent uptake of single-stranded DNA by duplex DNA, and the ATP-dependent hybridization of homologous single-stranded DNAs. It interacts with LexA causing its activation and leading to its autocatalytic cleavage. This chain is Protein RecA, found in Rhizobium leguminosarum bv. trifolii (strain WSM2304).